The following is a 96-amino-acid chain: Exodeoxyribonuclease 7 small subunit (96 aa).

Residues Ala-61–Ser-79 show a composition bias toward basic and acidic residues. The interval Ala-61–Phe-96 is disordered. The span at Lys-80 to Ser-89 shows a compositional bias: low complexity.

This sequence belongs to the XseB family. In terms of assembly, heterooligomer composed of large and small subunits.

It localises to the cytoplasm. The catalysed reaction is Exonucleolytic cleavage in either 5'- to 3'- or 3'- to 5'-direction to yield nucleoside 5'-phosphates.. Functionally, bidirectionally degrades single-stranded DNA into large acid-insoluble oligonucleotides, which are then degraded further into small acid-soluble oligonucleotides. The sequence is that of Exodeoxyribonuclease 7 small subunit from Leptospira borgpetersenii serovar Hardjo-bovis (strain JB197).